The sequence spans 535 residues: MEEGRRGDREGKSAAGWTALSTTKTTLEEKRRLQANGSVGGDAGTSGFRRIVRLFFACMVAGGIQYGWALQLSLLSPYSQTLGISHSYVSLTWICGPIAGFVVQPIVGYYSDRCTMKMGRRRPFILVGCLIICISVMIIGFSADIGRHLGDTKEHCSTYTGPRWSAAMVYIVGFWFLDFANNTVQGPARAMMADLSAGHHGPNVGQSIFSLWMAIGSVLGYLSGANGKWHEWFPWLKTAACCDACANLKGAFFTAVLLIVVSMTVTMYLADEMPLDKQDVDTSGGGGCAVFVDLFKSLRNLPPAMFKVLAVTAVTWLSWFPFIQYNTDWMGREIYHGEPQGTAAKADVYDAGVREGAMGLLFCSVALGVTSFVIPKLCRRLTSKVVWSISNFLVFALMAVMVAVGMVSMRGYRPSLAAGLTGPDPTLKAVALVVFALIGIPQAVLFSVPWAVASEVTAEEGGGQGLAIGVLNIAIVVPQLVIALTAGPIDGAFNKGNTPAFGIGGAFAFICGVLALIWLPKTRGVSNAAVVAGGH.

Topologically, residues 1-53 (MEEGRRGDREGKSAAGWTALSTTKTTLEEKRRLQANGSVGGDAGTSGFRRIVR) are cytoplasmic. Residues 54–74 (LFFACMVAGGIQYGWALQLSL) form a helical membrane-spanning segment. The Extracellular segment spans residues 75–87 (LSPYSQTLGISHS). A helical transmembrane segment spans residues 88 to 108 (YVSLTWICGPIAGFVVQPIVG). Topologically, residues 109 to 122 (YYSDRCTMKMGRRR) are cytoplasmic. The helical transmembrane segment at 123–143 (PFILVGCLIICISVMIIGFSA) threads the bilayer. At 144-163 (DIGRHLGDTKEHCSTYTGPR) the chain is on the extracellular side. A helical membrane pass occupies residues 164–184 (WSAAMVYIVGFWFLDFANNTV). Residues 185-203 (QGPARAMMADLSAGHHGPN) lie on the Cytoplasmic side of the membrane. A helical transmembrane segment spans residues 204–224 (VGQSIFSLWMAIGSVLGYLSG). Residues 225–249 (ANGKWHEWFPWLKTAACCDACANLK) lie on the Extracellular side of the membrane. The chain crosses the membrane as a helical span at residues 250–270 (GAFFTAVLLIVVSMTVTMYLA). Over 271 to 302 (DEMPLDKQDVDTSGGGGCAVFVDLFKSLRNLP) the chain is Cytoplasmic. The chain crosses the membrane as a helical span at residues 303-323 (PAMFKVLAVTAVTWLSWFPFI). The Extracellular segment spans residues 324-354 (QYNTDWMGREIYHGEPQGTAAKADVYDAGVR). The chain crosses the membrane as a helical span at residues 355–375 (EGAMGLLFCSVALGVTSFVIP). Over 376-384 (KLCRRLTSK) the chain is Cytoplasmic. Residues 385–405 (VVWSISNFLVFALMAVMVAVG) traverse the membrane as a helical segment. Topologically, residues 406–429 (MVSMRGYRPSLAAGLTGPDPTLKA) are extracellular. The chain crosses the membrane as a helical span at residues 430–450 (VALVVFALIGIPQAVLFSVPW). Residues 451 to 465 (AVASEVTAEEGGGQG) lie on the Cytoplasmic side of the membrane. Residues 466-486 (LAIGVLNIAIVVPQLVIALTA) form a helical membrane-spanning segment. Residues 487–498 (GPIDGAFNKGNT) are Extracellular-facing. A helical transmembrane segment spans residues 499 to 519 (PAFGIGGAFAFICGVLALIWL). Topologically, residues 520–535 (PKTRGVSNAAVVAGGH) are cytoplasmic.

The protein belongs to the glycoside-pentoside-hexuronide (GPH) cation symporter transporter (TC 2.A.2.4) family. In terms of assembly, homodimer. Widely expressed. Highest expression in sink leaves and lowest in germinating seeds.

The protein resides in the cell membrane. It participates in glycan biosynthesis; sucrose metabolism. Functionally, responsible for the transport of sucrose into the cell, with the concomitant uptake of protons (symport system). Can also transport other glucosides such as maltose, arbutin, salicin, helicin, alpha-phenylglucoside and beta-phenylglucoside. The chain is Sucrose transport protein SUT5 (SUT5) from Oryza sativa subsp. japonica (Rice).